Consider the following 428-residue polypeptide: Aminotransferase verI (428 aa).

K254 bears the N6-(pyridoxal phosphate)lysine mark.

This sequence belongs to the class-I pyridoxal-phosphate-dependent aminotransferase family. The cofactor is pyridoxal 5'-phosphate.

It functions in the pathway mycotoxin biosynthesis. In terms of biological role, aminotransferase; part of the gene cluster that mediates the biosynthesis of 11'-deoxyverticillin A, one of the dimeric epipolythiodioxopiperazines (ETPs) from the verticillin family that act as mycotoxins. 11'-deoxyverticillin A is required for normal conidiation. The nonribosomal peptide synthetase verP is speculated to be responsible for condensation of amino acids to form the carbon skeleton of verticillin, whereas the cluster-specific tailoring enzymes are involved in further modifications leading to the production of 11'-deoxyverticillin A. The polypeptide is Aminotransferase verI (Clonostachys rogersoniana).